The following is a 160-amino-acid chain: MKLNEIRDNEGARKSRIRVGRGIGSGKGKTGGRGVKGQKSRTGVAIKGYEGGQMPIHMRLPKRGFKNLFRPDYNSVNLGRVQAAVDAGKLDKGATVDAAALVAAGVIRRAKDGVRLLAQGELKAKLSFEVAGVSASAKEAVEKAGGSVTVVGPKAKAAAE.

The span at Met1–Arg13 shows a compositional bias: basic and acidic residues. The interval Met1 to Arg41 is disordered. A compositionally biased stretch (gly residues) spans Arg21–Val35.

The protein belongs to the universal ribosomal protein uL15 family. Part of the 50S ribosomal subunit.

Its function is as follows. Binds to the 23S rRNA. The protein is Large ribosomal subunit protein uL15 of Parvibaculum lavamentivorans (strain DS-1 / DSM 13023 / NCIMB 13966).